We begin with the raw amino-acid sequence, 306 residues long: Tryptophan 2,3-dioxygenase (306 aa).

The interval M1–A29 is disordered. Substrate contacts are provided by residues F75 to H79, Y137, and R141. Residue H264 coordinates heme. Residue T278 participates in substrate binding.

It belongs to the tryptophan 2,3-dioxygenase family. Homotetramer. Heme is required as a cofactor.

It catalyses the reaction L-tryptophan + O2 = N-formyl-L-kynurenine. It functions in the pathway amino-acid degradation; L-tryptophan degradation via kynurenine pathway; L-kynurenine from L-tryptophan: step 1/2. Functionally, heme-dependent dioxygenase that catalyzes the oxidative cleavage of the L-tryptophan (L-Trp) pyrrole ring and converts L-tryptophan to N-formyl-L-kynurenine. Catalyzes the oxidative cleavage of the indole moiety. This is Tryptophan 2,3-dioxygenase from Burkholderia mallei (strain NCTC 10247).